A 196-amino-acid polypeptide reads, in one-letter code: Phosphoheptose isomerase (196 aa).

Residues 36-196 (MVACLMNEGK…AVDYMLLGGD (161 aa)) enclose the SIS domain. A substrate-binding site is contributed by 51-53 (NGG). Zn(2+) is bound by residues His-60 and Glu-64. Substrate is bound by residues Glu-64, 93–94 (ND), 119–121 (STS), Ser-124, and Gln-174. Zn(2+) contacts are provided by Gln-174 and His-182.

This sequence belongs to the SIS family. GmhA subfamily. As to quaternary structure, homotetramer. Zn(2+) is required as a cofactor.

It localises to the cytoplasm. The catalysed reaction is 2 D-sedoheptulose 7-phosphate = D-glycero-alpha-D-manno-heptose 7-phosphate + D-glycero-beta-D-manno-heptose 7-phosphate. Its pathway is carbohydrate biosynthesis; D-glycero-D-manno-heptose 7-phosphate biosynthesis; D-glycero-alpha-D-manno-heptose 7-phosphate and D-glycero-beta-D-manno-heptose 7-phosphate from sedoheptulose 7-phosphate: step 1/1. Functionally, catalyzes the isomerization of sedoheptulose 7-phosphate in D-glycero-D-manno-heptose 7-phosphate. The chain is Phosphoheptose isomerase from Laribacter hongkongensis (strain HLHK9).